The following is a 341-amino-acid chain: L-threonine 3-dehydrogenase (341 aa).

Residue Cys38 participates in Zn(2+) binding. Catalysis depends on charge relay system residues Thr40 and His43. The Zn(2+) site is built by His63, Glu64, Cys93, Cys96, Cys99, and Cys107. Residues Ile175, Asp195, Arg200, 262-264 (LGI), and 286-287 (IY) contribute to the NAD(+) site.

The protein belongs to the zinc-containing alcohol dehydrogenase family. Homotetramer. It depends on Zn(2+) as a cofactor.

The protein resides in the cytoplasm. It carries out the reaction L-threonine + NAD(+) = (2S)-2-amino-3-oxobutanoate + NADH + H(+). Its pathway is amino-acid degradation; L-threonine degradation via oxydo-reductase pathway; glycine from L-threonine: step 1/2. Its function is as follows. Catalyzes the NAD(+)-dependent oxidation of L-threonine to 2-amino-3-ketobutyrate. In Serratia proteamaculans (strain 568), this protein is L-threonine 3-dehydrogenase.